A 552-amino-acid chain; its full sequence is Non-structural protein NS1 (552 aa).

The chain is Non-structural protein NS1 (Segment-5) from Bluetongue virus 1 (isolate South Africa) (BTV 1).